Here is a 143-residue protein sequence, read N- to C-terminus: Ponticulin (143 aa).

The signal sequence occupies residues 1 to 22 (MLVLRNLLALVTLALLFTLSSA). A glycan (N-linked (GlcNAc...) asparagine) is linked at N111. Residue S118 is the site of GPI-like-anchor amidated serine attachment. A propeptide spans 119–143 (SSGSTVMIGLASSLLFAFATLLALF) (removed in mature form).

The protein belongs to the ponticulin family. As to quaternary structure, monomer. Post-translationally, disulfide bond(s) stabilize the native, actin-binding conformation of ponticulin. The GPI-like-anchor contains a phosphoceramide group, rather than a phosphatidyl group.

The protein localises to the cell membrane. Functionally, binds F-actin and nucleates actin assembly. Major high affinity link between the plasma membrane and the cortical actin network. The chain is Ponticulin (ponA) from Dictyostelium discoideum (Social amoeba).